Here is a 360-residue protein sequence, read N- to C-terminus: Peptide chain release factor 1 (360 aa).

Position 236 is an N5-methylglutamine (Gln-236).

The protein belongs to the prokaryotic/mitochondrial release factor family. Methylated by PrmC. Methylation increases the termination efficiency of RF1.

The protein localises to the cytoplasm. Functionally, peptide chain release factor 1 directs the termination of translation in response to the peptide chain termination codons UAG and UAA. The sequence is that of Peptide chain release factor 1 from Lactiplantibacillus plantarum (strain ATCC BAA-793 / NCIMB 8826 / WCFS1) (Lactobacillus plantarum).